Reading from the N-terminus, the 488-residue chain is Protein nucleotidyltransferase YdiU (488 aa).

ATP is bound by residues Gly91, Gly93, Arg94, Lys114, Asp126, Gly127, Arg177, and Arg184. The active-site Proton acceptor is the Asp253. 2 residues coordinate Mg(2+): Asn254 and Asp263. ATP is bound at residue Asp263.

The protein belongs to the SELO family. Requires Mg(2+) as cofactor. It depends on Mn(2+) as a cofactor.

The enzyme catalyses L-seryl-[protein] + ATP = 3-O-(5'-adenylyl)-L-seryl-[protein] + diphosphate. The catalysed reaction is L-threonyl-[protein] + ATP = 3-O-(5'-adenylyl)-L-threonyl-[protein] + diphosphate. It catalyses the reaction L-tyrosyl-[protein] + ATP = O-(5'-adenylyl)-L-tyrosyl-[protein] + diphosphate. It carries out the reaction L-histidyl-[protein] + UTP = N(tele)-(5'-uridylyl)-L-histidyl-[protein] + diphosphate. The enzyme catalyses L-seryl-[protein] + UTP = O-(5'-uridylyl)-L-seryl-[protein] + diphosphate. The catalysed reaction is L-tyrosyl-[protein] + UTP = O-(5'-uridylyl)-L-tyrosyl-[protein] + diphosphate. Its function is as follows. Nucleotidyltransferase involved in the post-translational modification of proteins. It can catalyze the addition of adenosine monophosphate (AMP) or uridine monophosphate (UMP) to a protein, resulting in modifications known as AMPylation and UMPylation. The chain is Protein nucleotidyltransferase YdiU from Bacillus cereus (strain G9842).